The primary structure comprises 251 residues: Small ribosomal subunit protein uS2 (251 aa).

Belongs to the universal ribosomal protein uS2 family.

The chain is Small ribosomal subunit protein uS2 from Nitrosomonas eutropha (strain DSM 101675 / C91 / Nm57).